Here is a 363-residue protein sequence, read N- to C-terminus: NAD-dependent epimerase/dehydratase tndE (363 aa).

The helical transmembrane segment at 10-30 threads the bilayer; that stretch reads GLVLITGVNGFLASHLALQLI. An NADP(+)-binding site is contributed by Y176.

Belongs to the NAD(P)-dependent epimerase/dehydratase family. Dihydroflavonol-4-reductase subfamily.

The protein localises to the membrane. Its pathway is secondary metabolite biosynthesis; terpenoid biosynthesis. Functionally, NAD-dependent epimerase/dehydratase; part of the gene cluster that mediates the biosynthesis of talaronoid C, a fusicoccane diterpenoid with an unprecedented tricyclic 5/8/6 ring system. The first step in the pathway is performed by the fusicoccadiene synthase tndC that possesses both prenyl transferase and terpene cyclase activity, converting isopentenyl diphosphate and dimethylallyl diphosphate into geranylgeranyl diphosphate (GGDP) and further converting GGDP into talarodiene, a precursor for talaronoid C. The remaining enzymes from the cluster include the cytochrome P450 monooxygenase tndB, the aldehyde reductase tndE and the alcohol dehydrogenase tndF that are involved in the conversion of talarodiene into talaronoid C. This is NAD-dependent epimerase/dehydratase tndE from Aspergillus flavipes.